Reading from the N-terminus, the 557-residue chain is DNA ligase (557 aa).

An ATP-binding site is contributed by E249. Residue K251 is the N6-AMP-lysine intermediate of the active site. R256, R271, E301, F340, R417, and K423 together coordinate ATP.

This sequence belongs to the ATP-dependent DNA ligase family. Mg(2+) serves as cofactor.

It carries out the reaction ATP + (deoxyribonucleotide)n-3'-hydroxyl + 5'-phospho-(deoxyribonucleotide)m = (deoxyribonucleotide)n+m + AMP + diphosphate.. In terms of biological role, DNA ligase that seals nicks in double-stranded DNA during DNA replication, DNA recombination and DNA repair. The protein is DNA ligase of Methanothermobacter thermautotrophicus (Methanobacterium thermoformicicum).